The primary structure comprises 205 residues: Ypt/Rab-type GTPase avaA (205 aa).

GTP is bound by residues 17-23 (SGVGKTS), 33-40 (FSGSYKAT), glycine 66, 125-128 (NKID), and 157-159 (SAK). Positions 37–45 (YKATIGADF) match the Effector region motif. 2 S-geranylgeranyl cysteine lipidation sites follow: cysteine 203 and cysteine 205. A Cysteine methyl ester modification is found at cysteine 205.

This sequence belongs to the small GTPase superfamily. Rab family.

With respect to regulation, rab activation is generally mediated by a guanine exchange factor (GEF), while inactivation through hydrolysis of bound GTP is catalyzed by a GTPase activating protein (GAP). Its function is as follows. Ypt/Rab-type GTPases are key regulators of membrane trafficking and intracellular vesicular transport. They act as molecular switches that convert between GTP-bound and GDP-bound states, and regulate virtually all steps of membrane traffic from the formation of the transport vesicle at the donor membrane to its fusion at the target membrane. In the GDP-bound state, Ypt proteins are predominantly cytosolic, solubilized through the interaction with a GDP dissociation inhibitor (GDI). In the GTP-bound state, the proteins are membrane bound and interact with specific effector proteins that select cargo, promote vesicle movement, or verify the correct site of fusion. AvaA functions in vacuolar biogenesis. The chain is Ypt/Rab-type GTPase avaA from Emericella nidulans (strain FGSC A4 / ATCC 38163 / CBS 112.46 / NRRL 194 / M139) (Aspergillus nidulans).